A 545-amino-acid chain; its full sequence is MFILNNRKWRKLKRDPSAFFRDSKFNFLRYFSAKKFAKNFKNSSHIHKTNISKAQSNISSTLKQNRKQDMLIPINFFNFEYIVKKLNNQNAIGVYILPSNLTLKPALCILESHKEDFLNKFLLTISSENLKLQYKFNGQIKNPKSVNEIWTDLFSIAHVDMKLSTDRTLSSSISQFWFRLEFCKEDKDFILFPTANRYSRKLWKHSIKNNQLFKEGIRNYSEISSLPYEEDHNFDIDLVFTWVNSEDKNWQELYKKYKPDFNSDATSTSRFLSRDELKFALRSWEMNGSFIRKIFIVSNCAPPAWLDLNNPKIQWVYHEEIMPQSALPTFSSHAIETSLHHIPGISNYFIYSNDDFLLTKPLNKDNFFYSNGIAKLRLEAWGNVNGECTEGEPDYLNGARNANTLLEKEFKKFTTKLHTHSPQSMRTDILFEMEKKYPEEFNRTLHNKFRSLDDIAVTGYLYHHYALLSGRALQSSDKTELVQQNHDFKKKLNNVVTLTKERNFDKLPLSVCINDGADSHLNEEWNVQVIKFLETLFPLPSSFEK.

This sequence belongs to the stealth family.

In terms of biological role, may be the polymerase that links individual UDP-N-acetyl-D-mannosamine monomers. In serotype A the capsule is composed of repeated units of (alpha 1-6)-linked N-acetyl-D-mannosamine-1-phosphate. The sequence is that of Capsular polysaccharide phosphotransferase SacB (sacB) from Neisseria meningitidis serogroup A.